We begin with the raw amino-acid sequence, 223 residues long: UPF0173 metal-dependent hydrolase TV0864 (223 aa).

Belongs to the UPF0173 family.

This is UPF0173 metal-dependent hydrolase TV0864 from Thermoplasma volcanium (strain ATCC 51530 / DSM 4299 / JCM 9571 / NBRC 15438 / GSS1).